We begin with the raw amino-acid sequence, 453 residues long: tRNA modification GTPase MnmE (453 aa).

(6S)-5-formyl-5,6,7,8-tetrahydrofolate-binding residues include arginine 22, glutamate 79, and lysine 119. Positions 215–376 (GMKVVIAGRP…LKQHLKSLMG (162 aa)) constitute a TrmE-type G domain. Asparagine 225 lines the K(+) pocket. Residues 225-230 (NAGKSS), 244-250 (TEIAGTT), 269-272 (DTAG), and 334-337 (NKAD) contribute to the GTP site. Serine 229 is a binding site for Mg(2+). 3 residues coordinate K(+): threonine 244, isoleucine 246, and threonine 249. Position 250 (threonine 250) interacts with Mg(2+). Lysine 453 is a binding site for (6S)-5-formyl-5,6,7,8-tetrahydrofolate.

The protein belongs to the TRAFAC class TrmE-Era-EngA-EngB-Septin-like GTPase superfamily. TrmE GTPase family. Homodimer. Heterotetramer of two MnmE and two MnmG subunits. Requires K(+) as cofactor.

It is found in the cytoplasm. Exhibits a very high intrinsic GTPase hydrolysis rate. Involved in the addition of a carboxymethylaminomethyl (cmnm) group at the wobble position (U34) of certain tRNAs, forming tRNA-cmnm(5)s(2)U34. The sequence is that of tRNA modification GTPase MnmE from Shewanella pealeana (strain ATCC 700345 / ANG-SQ1).